The following is a 181-amino-acid chain: Adenylate kinase (181 aa).

Position 10–15 (10–15 (GAGKGT)) interacts with ATP. The segment at 30 to 59 (STGDLFRANIGQATALGVEAKKYIDAGELV) is NMP. AMP contacts are provided by residues T31, R36, 57–59 (ELV), 85–88 (GFPR), and Q92. Positions 126 to 132 (ARGRADD) are LID. ATP is bound at residue R127. Positions 129 and 140 each coordinate AMP. An ATP-binding site is contributed by G166.

It belongs to the adenylate kinase family. Monomer.

Its subcellular location is the cytoplasm. It carries out the reaction AMP + ATP = 2 ADP. Its pathway is purine metabolism; AMP biosynthesis via salvage pathway; AMP from ADP: step 1/1. Catalyzes the reversible transfer of the terminal phosphate group between ATP and AMP. Plays an important role in cellular energy homeostasis and in adenine nucleotide metabolism. The polypeptide is Adenylate kinase (Rhodococcus erythropolis (strain PR4 / NBRC 100887)).